The primary structure comprises 117 residues: Large ribosomal subunit protein uL18 (117 aa).

Positions 1-17 (MNLSRNKARKVKQKRLR) are enriched in basic residues. The segment at 1-23 (MNLSRNKARKVKQKRLRAKSELS) is disordered.

It belongs to the universal ribosomal protein uL18 family. In terms of assembly, part of the 50S ribosomal subunit; part of the 5S rRNA/L5/L18/L25 subcomplex. Contacts the 5S and 23S rRNAs.

Functionally, this is one of the proteins that bind and probably mediate the attachment of the 5S RNA into the large ribosomal subunit, where it forms part of the central protuberance. In Mycoplasmopsis synoviae (strain 53) (Mycoplasma synoviae), this protein is Large ribosomal subunit protein uL18.